Here is a 266-residue protein sequence, read N- to C-terminus: 15-hydroxyprostaglandin dehydrogenase [NAD(+)] (266 aa).

NAD(+)-binding positions include 12-20 (GAAQGIGRA), 36-37 (DW), 63-65 (CDV), and Asn-91. Substrate is bound by residues Ser-138 and Gln-148. Residue Tyr-151 is the Proton acceptor of the active site. Residues 151–155 (YCASK) and 186–188 (VDT) contribute to the NAD(+) site.

Belongs to the short-chain dehydrogenases/reductases (SDR) family. As to quaternary structure, homodimer.

Its subcellular location is the cytoplasm. It catalyses the reaction prostaglandin E2 + NAD(+) = 15-oxoprostaglandin E2 + NADH + H(+). The catalysed reaction is (15S)-hydroxy-(5Z,8Z,11Z,13E)-eicosatetraenoate + NAD(+) = 15-oxo-(5Z,8Z,11Z,13E)-eicosatetraenoate + NADH + H(+). It carries out the reaction (11R)-hydroxy-(5Z,8Z,12E,14Z)-eicosatetraenoate + NAD(+) = 11-oxo-(5Z,8Z,12E,14Z)-eicosatetraenoate + NADH + H(+). The enzyme catalyses lipoxin A4 + NAD(+) = 15-oxo-(5S,6R)-dihydroxy-(7E,9E,11Z,13E)-eicosatetraenoate + NADH + H(+). It catalyses the reaction 15-oxo-(5S,6R)-dihydroxy-(7E,9E,11Z)-eicosatrienoate + NADH + H(+) = (5S,6R,15S)-trihydroxy-(7E,9E,11Z)-eicosatrienoate + NAD(+). The catalysed reaction is prostaglandin A1 + NAD(+) = 15-oxo-prostaglandin A1 + NADH + H(+). It carries out the reaction prostaglandin E1 + NAD(+) = 15-oxoprostaglandin E1 + NADH + H(+). The enzyme catalyses 14-hydroxy-(4Z,7Z,10Z,12E,16Z,19Z)-docosahexaenoate + NAD(+) = 14-oxo-(4Z,7Z,10Z,12E,16Z,19Z)-docosahexaenoate + NADH + H(+). It catalyses the reaction resolvin E1 + NAD(+) = 18-oxo-resolvin E1 + NADH + H(+). The catalysed reaction is resolvin D1 + NAD(+) = 8-oxoresolvin D1 + NADH + H(+). It carries out the reaction resolvin D1 + NAD(+) = 17-oxoresolvin D1 + NADH + H(+). The enzyme catalyses resolvin D2 + NAD(+) = 7-oxoresolvin D2 + NADH + H(+). It catalyses the reaction resolvin D2 + NAD(+) = 16-oxoresolvin D2 + NADH + H(+). Functionally, catalyzes the NAD-dependent dehydrogenation (oxidation) of a broad array of hydroxylated polyunsaturated fatty acids (mainly eicosanoids and docosanoids, including prostaglandins, lipoxins and resolvins), yielding their corresponding keto (oxo) metabolites. Decreases the levels of the pro-proliferative prostaglandins such as prostaglandin E2 (whose activity is increased in cancer because of an increase in the expression of cyclooxygenase 2) and generates oxo-fatty acid products that can profoundly influence cell function by abrogating pro-inflammatory cytokine expression. Converts resolvins E1, D1 and D2 to their oxo products, which represents a mode of resolvin inactivation. Resolvin E1 plays important roles during the resolution phase of acute inflammation, while resolvins D1 and D2 have a unique role in obesity-induced adipose inflammation. This Bos taurus (Bovine) protein is 15-hydroxyprostaglandin dehydrogenase [NAD(+)] (HPGD).